A 776-amino-acid chain; its full sequence is Ent-8-alpha-hydroxylabd-13-en-15-yl diphosphate synthase CPS4, chloroplastic (776 aa).

The transit peptide at Met-1–Ala-60 directs the protein to the chloroplast. Lys-226 contacts substrate. Mg(2+)-binding residues include Asp-357 and Asp-359. Residues Asp-357–Asp-360 carry the DXDD motif motif. Substrate is bound at residue Lys-443.

Belongs to the terpene synthase family. The cofactor is Mg(2+).

It localises to the plastid. The protein localises to the chloroplast. The enzyme catalyses ent-8alpha-hydroxylabd-13-en-15-yl diphosphate = (2E,6E,10E)-geranylgeranyl diphosphate + H2O. It participates in secondary metabolite biosynthesis; terpenoid biosynthesis. Functionally, involved in diterpenoid biosynthesis. Catalyzes the conversion of all-trans-geranylgeranyl diphosphate to ent-8alpha-hydroxylabd-13-en-15-yl diphosphate. This is Ent-8-alpha-hydroxylabd-13-en-15-yl diphosphate synthase CPS4, chloroplastic from Salvia miltiorrhiza (Chinese sage).